Consider the following 761-residue polypeptide: RNA-binding protein mde7 (761 aa).

Composition is skewed to polar residues over residues 31-46, 58-83, and 99-110; these read PNHS…NSLL, SRNS…TTPF, and SRNNSYLQGTAE. Disordered stretches follow at residues 31-110 and 188-213; these read PNHS…GTAE and HYFD…EASN. Residues 188-197 are compositionally biased toward basic and acidic residues; that stretch reads HYFDDTDKSV. The span at 199–211 shows a compositional bias: low complexity; the sequence is SKSSSGSNSLSEA. Positions 223–289 constitute an RRM 1 domain; it reads IVGGLPDDFD…SSTNNFTIIQ (67 aa). Residues 442-466 show a composition bias toward polar residues; it reads ESNSLSNQPNNFAQTSFDYQPNHPN. The interval 442 to 468 is disordered; that stretch reads ESNSLSNQPNNFAQTSFDYQPNHPNAI. Residues 602–679 form the RRM 2 domain; that stretch reads NTIYVGNLSN…GGIRLSYSKN (78 aa).

This is RNA-binding protein mde7 (mde7) from Schizosaccharomyces pombe (strain 972 / ATCC 24843) (Fission yeast).